Here is a 548-residue protein sequence, read N- to C-terminus: Probable malate:quinone oxidoreductase (548 aa).

Residues Lys-522–Leu-548 are disordered. Positions Val-539–Leu-548 are enriched in basic and acidic residues.

It belongs to the MQO family. It depends on FAD as a cofactor.

It catalyses the reaction (S)-malate + a quinone = a quinol + oxaloacetate. The protein operates within carbohydrate metabolism; tricarboxylic acid cycle; oxaloacetate from (S)-malate (quinone route): step 1/1. This Escherichia coli O9:H4 (strain HS) protein is Probable malate:quinone oxidoreductase.